A 216-amino-acid polypeptide reads, in one-letter code: Large ribosomal subunit protein uL3 (216 aa).

Residues 137-158 (GASHGAHKNHRKPGSIGGASTP) form a disordered region.

This sequence belongs to the universal ribosomal protein uL3 family. In terms of assembly, part of the 50S ribosomal subunit. Forms a cluster with proteins L14 and L19.

One of the primary rRNA binding proteins, it binds directly near the 3'-end of the 23S rRNA, where it nucleates assembly of the 50S subunit. The chain is Large ribosomal subunit protein uL3 from Arthrobacter sp. (strain FB24).